Here is a 167-residue protein sequence, read N- to C-terminus: Ubiquitin-conjugating enzyme E2 15 (167 aa).

The UBC core domain maps to 5-165 (ASEQLLRKQL…VRRLVRRSIE (161 aa)). The Glycyl thioester intermediate role is filled by Cys90.

The protein belongs to the ubiquitin-conjugating enzyme family.

The enzyme catalyses S-ubiquitinyl-[E1 ubiquitin-activating enzyme]-L-cysteine + [E2 ubiquitin-conjugating enzyme]-L-cysteine = [E1 ubiquitin-activating enzyme]-L-cysteine + S-ubiquitinyl-[E2 ubiquitin-conjugating enzyme]-L-cysteine.. It functions in the pathway protein modification; protein ubiquitination. Its function is as follows. Catalyzes the covalent attachment of ubiquitin to other proteins. Has a role in the formation of chromatin structures that influence the localization of transcriptional silencing factors. This Schizosaccharomyces pombe (strain 972 / ATCC 24843) (Fission yeast) protein is Ubiquitin-conjugating enzyme E2 15 (ubc15).